Consider the following 164-residue polypeptide: Protein-export protein SecB (164 aa).

This sequence belongs to the SecB family. As to quaternary structure, homotetramer, a dimer of dimers. One homotetramer interacts with 1 SecA dimer.

Its subcellular location is the cytoplasm. One of the proteins required for the normal export of preproteins out of the cell cytoplasm. It is a molecular chaperone that binds to a subset of precursor proteins, maintaining them in a translocation-competent state. It also specifically binds to its receptor SecA. The protein is Protein-export protein SecB of Ruegeria sp. (strain TM1040) (Silicibacter sp.).